The primary structure comprises 493 residues: Glutamyl-tRNA(Gln) amidotransferase subunit A (493 aa).

Active-site charge relay system residues include lysine 78 and serine 158. The Acyl-ester intermediate role is filled by serine 182.

The protein belongs to the amidase family. GatA subfamily. Heterotrimer of A, B and C subunits.

It catalyses the reaction L-glutamyl-tRNA(Gln) + L-glutamine + ATP + H2O = L-glutaminyl-tRNA(Gln) + L-glutamate + ADP + phosphate + H(+). In terms of biological role, allows the formation of correctly charged Gln-tRNA(Gln) through the transamidation of misacylated Glu-tRNA(Gln) in organisms which lack glutaminyl-tRNA synthetase. The reaction takes place in the presence of glutamine and ATP through an activated gamma-phospho-Glu-tRNA(Gln). The sequence is that of Glutamyl-tRNA(Gln) amidotransferase subunit A from Rickettsia conorii (strain ATCC VR-613 / Malish 7).